The primary structure comprises 203 residues: 5-formyltetrahydrofolate cyclo-ligase (203 aa).

Ala2 is subject to N-acetylalanine. Residues 10-14 (KRGLR) and Arg14 each bind ATP. Residues Leu56, Glu61, and 148–152 (RGKGY) contribute to the substrate site. 145 to 153 (RLGRGKGYY) is an ATP binding site. Mg(2+)-binding residues include Asp154 and Asp189.

This sequence belongs to the 5-formyltetrahydrofolate cyclo-ligase family. As to quaternary structure, monomer. Requires Mg(2+) as cofactor.

The protein localises to the cytoplasm. It catalyses the reaction (6S)-5-formyl-5,6,7,8-tetrahydrofolate + ATP = (6R)-5,10-methenyltetrahydrofolate + ADP + phosphate. In terms of biological role, contributes to tetrahydrofolate metabolism. Helps regulate carbon flow through the folate-dependent one-carbon metabolic network that supplies carbon for the biosynthesis of purines, thymidine and amino acids. Catalyzes the irreversible conversion of 5-formyltetrahydrofolate (5-CHO-H(4)PteGlu) to yield 5,10-methenyltetrahydrofolate. This is 5-formyltetrahydrofolate cyclo-ligase (Mthfs) from Mus musculus (Mouse).